We begin with the raw amino-acid sequence, 683 residues long: Probable serine/threonine-protein kinase HAL5-like (683 aa).

Disordered regions lie at residues 1 to 90 and 157 to 200; these read MPQQ…VSDE and YPQN…SKKA. Over residues 36–48 the composition is skewed to low complexity; the sequence is PSSAATSDSSEMS. Positions 50–60 are enriched in gly residues; the sequence is AQGGRGNGLLG. The span at 69-85 shows a compositional bias: polar residues; sequence SPKSEAQFTQRNKSAES. A Protein kinase domain is found at 364–670; the sequence is GKCIGMIGQG…IPKLLDTPWM (307 aa). ATP contacts are provided by residues 370-378 and K411; that span reads IGQGAYGTV. D521 (proton acceptor) is an active-site residue.

This sequence belongs to the protein kinase superfamily. CAMK Ser/Thr protein kinase family. NPR/HAL subfamily. HAL5 sub-subfamily.

The catalysed reaction is L-seryl-[protein] + ATP = O-phospho-L-seryl-[protein] + ADP + H(+). The enzyme catalyses L-threonyl-[protein] + ATP = O-phospho-L-threonyl-[protein] + ADP + H(+). The sequence is that of Probable serine/threonine-protein kinase HAL5-like from Eremothecium gossypii (strain ATCC 10895 / CBS 109.51 / FGSC 9923 / NRRL Y-1056) (Yeast).